Consider the following 300-residue polypeptide: Histone deacetylase HDT3 (300 aa).

Residues 98–112 (EDEMDLDSEDEDEEL) show a composition bias toward acidic residues. The disordered stretch occupies residues 98–300 (EDEMDLDSED…AHSKAKHGGK (203 aa)). Residues 119–132 (ENGKADEKKQKSQE) show a composition bias toward basic and acidic residues. A compositionally biased stretch (acidic residues) spans 151–197 (DDDSDEDETDDSDEDETDDSDEGLSPEEGDDDSSDEDDTSDDEEEDT). Residues 198 to 211 (PTPKKPEVGKKRAA) show a composition bias toward basic and acidic residues. The span at 265–275 (SPKSAPKSGVP) shows a compositional bias: low complexity. A C2H2-type zinc finger spans residues 274-297 (VPCKSCSKSFISETAPQAHSKAKH). Polar residues predominate over residues 279 to 290 (CSKSFISETAPQ).

The protein belongs to the histone deacetylase HD2 family. In terms of assembly, multimer. Possibly forms a homotrimer with HDT1 and/or HDT2.

It is found in the nucleus. The protein localises to the nucleolus. Mediates the deacetylation of lysine residues on the N-terminal part of the core histones (H2A, H2B, H3 and H4). Histone deacetylation gives a tag for epigenetic repression and plays an important role in transcriptional regulation, cell cycle progression and developmental events. In Zea mays (Maize), this protein is Histone deacetylase HDT3 (HDT3).